The following is a 418-amino-acid chain: Light-independent protochlorophyllide reductase subunit N (418 aa).

[4Fe-4S] cluster is bound by residues Cys-17, Cys-42, and Cys-103.

This sequence belongs to the BchN/ChlN family. As to quaternary structure, protochlorophyllide reductase is composed of three subunits; ChlL, ChlN and ChlB. Forms a heterotetramer of two ChlB and two ChlN subunits. The cofactor is [4Fe-4S] cluster.

The catalysed reaction is chlorophyllide a + oxidized 2[4Fe-4S]-[ferredoxin] + 2 ADP + 2 phosphate = protochlorophyllide a + reduced 2[4Fe-4S]-[ferredoxin] + 2 ATP + 2 H2O. It participates in porphyrin-containing compound metabolism; chlorophyll biosynthesis (light-independent). Component of the dark-operative protochlorophyllide reductase (DPOR) that uses Mg-ATP and reduced ferredoxin to reduce ring D of protochlorophyllide (Pchlide) to form chlorophyllide a (Chlide). This reaction is light-independent. The NB-protein (ChlN-ChlB) is the catalytic component of the complex. The polypeptide is Light-independent protochlorophyllide reductase subunit N (Prochlorococcus marinus (strain MIT 9515)).